The sequence spans 449 residues: L-seryl-tRNA(Sec) selenium transferase (449 aa).

Lysine 286 carries the N6-(pyridoxal phosphate)lysine modification.

The protein belongs to the SelA family. Pyridoxal 5'-phosphate serves as cofactor.

Its subcellular location is the cytoplasm. The catalysed reaction is L-seryl-tRNA(Sec) + selenophosphate + H(+) = L-selenocysteinyl-tRNA(Sec) + phosphate. The protein operates within aminoacyl-tRNA biosynthesis; selenocysteinyl-tRNA(Sec) biosynthesis; selenocysteinyl-tRNA(Sec) from L-seryl-tRNA(Sec) (bacterial route): step 1/1. Converts seryl-tRNA(Sec) to selenocysteinyl-tRNA(Sec) required for selenoprotein biosynthesis. The protein is L-seryl-tRNA(Sec) selenium transferase of Sulfurimonas denitrificans (strain ATCC 33889 / DSM 1251) (Thiomicrospira denitrificans (strain ATCC 33889 / DSM 1251)).